The primary structure comprises 399 residues: MAREKFERNKPHVNIGTIGHVDHGKTTLTAAITNVLAKKGQAKVQDYADIDGAPEERERGITINTAHVEYETDTRHYAHVDCPGHADYVKNMITGAAQMDGAILVCAATDGPMAQTKEHILLAKQVGVPALVVALNKCDMVDDEEIIELVEMEIRELLSSYDFPGDDIPVVQVSGLKAIEGEAEWEAKIDELMQAVDANIPEPEREVDKPFLMAIEDVFSITGRGTVATGRIERGIVKVGEEIEIVGIKDTRKTTVTGVEMFRKLLDEGMAGDNVGLLLRGIQKEDIERGMVLVKPGSITPHTKFEGEVYVLKKEEGGRHTPFFAGYRPQFYIRTTDVTGQITAFTADDGSDVEMVMPGDRIKMTGELICPVAIEQGMRFAIREGGRTIGAGVVSKIIE.

The tr-type G domain maps to 10–204 (KPHVNIGTIG…AVDANIPEPE (195 aa)). Residues 19-26 (GHVDHGKT) form a G1 region. 19-26 (GHVDHGKT) contacts GTP. Thr-26 is a Mg(2+) binding site. The interval 60–64 (GITIN) is G2. Positions 81–84 (DCPG) are G3. Residues 81 to 85 (DCPGH) and 136 to 139 (NKCD) contribute to the GTP site. The interval 136–139 (NKCD) is G4. Residues 174-176 (SGL) are G5.

It belongs to the TRAFAC class translation factor GTPase superfamily. Classic translation factor GTPase family. EF-Tu/EF-1A subfamily. As to quaternary structure, monomer.

It localises to the cytoplasm. The catalysed reaction is GTP + H2O = GDP + phosphate + H(+). In terms of biological role, GTP hydrolase that promotes the GTP-dependent binding of aminoacyl-tRNA to the A-site of ribosomes during protein biosynthesis. This chain is Elongation factor Tu, found in Synechococcus sp. (strain WH7803).